A 176-amino-acid polypeptide reads, in one-letter code: MAAKNLPKVFFDIAVNGQHSGRMTFKLFSDTVPKTAENFRALCTGEKGKGISGKPLHYKNSYFHRIIPGFMAQGGDFTMGDGRGGESIYGRTFKDENFTLKHKGKGLLSMANAGPNTNGSQFFITFVDTPWLDGNHTVFGQIVDGSKVLDLLEQHGSRSGMPSAKIEITDCGELKD.

One can recognise a PPIase cyclophilin-type domain in the interval 10–173 (FFDIAVNGQH…AKIEITDCGE (164 aa)).

The protein belongs to the cyclophilin-type PPIase family.

The enzyme catalyses [protein]-peptidylproline (omega=180) = [protein]-peptidylproline (omega=0). Functionally, PPIases accelerate the folding of proteins. It catalyzes the cis-trans isomerization of proline imidic peptide bonds in oligopeptides. The polypeptide is Peptidyl-prolyl cis-trans isomerase cyp6 (cyp6) (Rhizopus delemar (strain RA 99-880 / ATCC MYA-4621 / FGSC 9543 / NRRL 43880) (Mucormycosis agent)).